We begin with the raw amino-acid sequence, 340 residues long: Guanine nucleotide-binding protein subunit beta-1 (340 aa).

At Ser-29 the chain carries Phosphoserine. WD repeat units lie at residues 53–92 (GHLA…KVHA), 95–134 (LRSS…GNVR), 141–179 (GHGG…QVTS), 182–221 (GHTG…CKQT), 224–263 (GHES…ELAM), 268–307 (NIIC…RSGI), and 310–340 (GHDN…RVWN).

This sequence belongs to the WD repeat G protein beta family. G proteins are composed of 3 units, alpha, beta and gamma. As to expression, expressed in the brain neuropil and cortex, and the thoracic ganglion (at protein level). Expression detected in eye at protein level but not at mRNA level, suggesting cross reactivity of antibodies to the similar Gbeta76C protein.

Guanine nucleotide-binding proteins (G proteins) are involved as a modulator or transducer in various transmembrane signaling systems. The beta and gamma chains are required for the GTPase activity, for replacement of GDP by GTP, and for G protein-effector interaction. The sequence is that of Guanine nucleotide-binding protein subunit beta-1 (Gbeta13F) from Drosophila melanogaster (Fruit fly).